A 95-amino-acid chain; its full sequence is Aspartyl/glutamyl-tRNA(Asn/Gln) amidotransferase subunit C (95 aa).

This sequence belongs to the GatC family. Heterotrimer of A, B and C subunits.

It carries out the reaction L-glutamyl-tRNA(Gln) + L-glutamine + ATP + H2O = L-glutaminyl-tRNA(Gln) + L-glutamate + ADP + phosphate + H(+). The enzyme catalyses L-aspartyl-tRNA(Asn) + L-glutamine + ATP + H2O = L-asparaginyl-tRNA(Asn) + L-glutamate + ADP + phosphate + 2 H(+). Functionally, allows the formation of correctly charged Asn-tRNA(Asn) or Gln-tRNA(Gln) through the transamidation of misacylated Asp-tRNA(Asn) or Glu-tRNA(Gln) in organisms which lack either or both of asparaginyl-tRNA or glutaminyl-tRNA synthetases. The reaction takes place in the presence of glutamine and ATP through an activated phospho-Asp-tRNA(Asn) or phospho-Glu-tRNA(Gln). The protein is Aspartyl/glutamyl-tRNA(Asn/Gln) amidotransferase subunit C of Magnetococcus marinus (strain ATCC BAA-1437 / JCM 17883 / MC-1).